The primary structure comprises 72 residues: Translation initiation factor IF-1 (72 aa).

The region spanning Met1 to Lys72 is the S1-like domain.

The protein belongs to the IF-1 family. In terms of assembly, component of the 30S ribosomal translation pre-initiation complex which assembles on the 30S ribosome in the order IF-2 and IF-3, IF-1 and N-formylmethionyl-tRNA(fMet); mRNA recruitment can occur at any time during PIC assembly.

The protein resides in the cytoplasm. Functionally, one of the essential components for the initiation of protein synthesis. Stabilizes the binding of IF-2 and IF-3 on the 30S subunit to which N-formylmethionyl-tRNA(fMet) subsequently binds. Helps modulate mRNA selection, yielding the 30S pre-initiation complex (PIC). Upon addition of the 50S ribosomal subunit IF-1, IF-2 and IF-3 are released leaving the mature 70S translation initiation complex. The polypeptide is Translation initiation factor IF-1 (Bartonella tribocorum (strain CIP 105476 / IBS 506)).